The primary structure comprises 99 residues: MLEQQRNPADALTVSVLNSQSQVTNKPLRDSVKQALRNYLSQLDGQDVNELYELVLAEVEHPMLDMVMQYTRGNQTRAATMLGINRGTLRKKLKKYGMG.

The H-T-H motif DNA-binding region spans 75-94; that stretch reads QTRAATMLGINRGTLRKKLK.

The protein belongs to the transcriptional regulatory Fis family. In terms of assembly, homodimer.

Functionally, activates ribosomal RNA transcription. Plays a direct role in upstream activation of rRNA promoters. The polypeptide is DNA-binding protein Fis (Pasteurella multocida (strain Pm70)).